The primary structure comprises 131 residues: MAAAVAMETDDAGNRLRFQLELEFVQCLANPNYLNFLAQRGYFKDKAFVNYLKYLLYWKEPEYAKYLKYPQCLHMLELLQYEHFRKELVNAQCAKFIDEQQILHWQHYSRKRVRLQQALAEQQQQNNTAGK.

At A2 the chain carries N-acetylalanine.

The protein belongs to the Mediator complex subunit 31 family. Component of the Mediator complex, which is composed of MED1, MED4, MED6, MED7, MED8, MED9, MED10, MED11, MED12, MED13, MED13L, MED14, MED15, MED16, MED17, MED18, MED19, MED20, MED21, MED22, MED23, MED24, MED25, MED26, MED27, MED29, MED30, MED31, CCNC, CDK8 and CDC2L6/CDK11. The MED12, MED13, CCNC and CDK8 subunits form a distinct module termed the CDK8 module. Mediator containing the CDK8 module is less active than Mediator lacking this module in supporting transcriptional activation. Individual preparations of the Mediator complex lacking one or more distinct subunits have been variously termed ARC, CRSP, DRIP, PC2, SMCC and TRAP.

The protein localises to the nucleus. In terms of biological role, component of the Mediator complex, a coactivator involved in the regulated transcription of nearly all RNA polymerase II-dependent genes. Mediator functions as a bridge to convey information from gene-specific regulatory proteins to the basal RNA polymerase II transcription machinery. Mediator is recruited to promoters by direct interactions with regulatory proteins and serves as a scaffold for the assembly of a functional preinitiation complex with RNA polymerase II and the general transcription factors. The polypeptide is Mediator of RNA polymerase II transcription subunit 31 (Med31) (Mus musculus (Mouse)).